A 149-amino-acid polypeptide reads, in one-letter code: CCAAT/enhancer-binding protein gamma (149 aa).

Polar residues predominate over residues 1 to 12 (MSKVSQQNSTPG). The interval 1–92 (MSKVSQQNST…SKQKAQDTLQ (92 aa)) is disordered. Lysine 3 is covalently cross-linked (Glycyl lysine isopeptide (Lys-Gly) (interchain with G-Cter in SUMO2)). Residues 28–37 (LQQVPQLVPA) show a composition bias toward low complexity. A compositionally biased stretch (basic and acidic residues) spans 56-72 (SPMDRNSDEYRQRRERN). Positions 62 to 125 (SDEYRQRRER…SVLKDLFLEH (64 aa)) constitute a bZIP domain. The tract at residues 66–93 (RQRRERNNMAVKKSRLKSKQKAQDTLQR) is basic motif. Residues 97–118 (LKEENERLEAKIKLLTKELSVL) are leucine-zipper. The disordered stretch occupies residues 128–149 (NLADNVQPSSTENTTNPDKAGQ). Residues 131–149 (DNVQPSSTENTTNPDKAGQ) show a composition bias toward polar residues.

It belongs to the bZIP family. C/EBP subfamily. Binds DNA as a dimer and can form stable heterodimers with CEBPA and CEBPB. Interacts with ZNF638; this interaction increases transcriptional activation.

The protein localises to the nucleus. Functionally, transcription factor that binds to the promoter and the enhancer regions of target genes. Binds to the enhancer element PRE-I (positive regulatory element-I) of the IL-4 gene. Binds to the promoter and the enhancer of the immunoglobulin heavy chain. Binds to GPE1, a cis-acting element in the G-CSF gene promoter. This is CCAAT/enhancer-binding protein gamma (CEBPG) from Bos taurus (Bovine).